A 112-amino-acid polypeptide reads, in one-letter code: Nitrogen regulatory protein GlnK2 (112 aa).

ADP contacts are provided by residues T29, 38 to 39, V64, and 87 to 90; these read QQ and GDGK. ATP is bound by residues T29, 38–39, V64, 87–90, and 101–103; these read QQ, GDGK, and RIR.

Belongs to the P(II) protein family. In terms of assembly, homotrimer. Interacts and forms a complex with Amt2.

Its subcellular location is the cytoplasm. Its activity is regulated as follows. Binding of adenosine nucleotides results in distinct, cooperative behavior for ATP and ADP. GlnK2 is completely insensitive to 2-oxoglutarate at a low level of intracellular nitrogen. Involved in the regulation of nitrogen metabolism. Regulates the activity of its targets by protein-protein interaction in response to the nitrogen status of the cell. Regulates the activity of the ammonia channel Amt2 via direct interaction. This is Nitrogen regulatory protein GlnK2 from Archaeoglobus fulgidus (strain ATCC 49558 / DSM 4304 / JCM 9628 / NBRC 100126 / VC-16).